The chain runs to 206 residues: Endoplasmic reticulum transmembrane protein YET-like (206 aa).

At 1–2 (ME) the chain is on the lumenal side. Residues 3–23 (FLMTLVFLVLLVEIVFCTFFM) form a helical membrane-spanning segment. Topologically, residues 24 to 46 (LPVSMHLRKNVYNKLDKLFGGQN) are cytoplasmic. Residues 47–67 (AKIFLKVLALLVIIVFCDSIV) traverse the membrane as a helical segment. The Lumenal segment spans residues 68–101 (NSYNINKKLHTPELTGAKFDRQNEYTRMFRYQRN). The chain crosses the membrane as a helical span at residues 102 to 122 (SYICGFCLYLFFLIYRSQGII). At 123–206 (SQLSNVEASK…KKPKTQKKDD (84 aa)) the chain is on the cytoplasmic side. The stretch at 140–198 (KNNLNTVETLLSENEKLKTEIKDLKKMEKEHKAMKSQAENTTKEYLKLQEEYNQLLGKK) forms a coiled coil. The Di-lysine motif signature appears at 203-206 (KKDD).

Belongs to the BCAP29/BCAP31 family.

The protein localises to the endoplasmic reticulum membrane. May play a role in anterograde transport of membrane proteins from the endoplasmic reticulum to the Golgi. The protein is Endoplasmic reticulum transmembrane protein YET-like of Dictyostelium discoideum (Social amoeba).